The following is a 134-amino-acid chain: Ribosome-binding factor A (134 aa).

The protein belongs to the RbfA family. As to quaternary structure, monomer. Binds 30S ribosomal subunits, but not 50S ribosomal subunits or 70S ribosomes.

The protein resides in the cytoplasm. Its function is as follows. One of several proteins that assist in the late maturation steps of the functional core of the 30S ribosomal subunit. Associates with free 30S ribosomal subunits (but not with 30S subunits that are part of 70S ribosomes or polysomes). Required for efficient processing of 16S rRNA. May interact with the 5'-terminal helix region of 16S rRNA. In Psychrobacter cryohalolentis (strain ATCC BAA-1226 / DSM 17306 / VKM B-2378 / K5), this protein is Ribosome-binding factor A.